Consider the following 656-residue polypeptide: F-box/LRR-repeat protein 10 (656 aa).

The region spanning 20 to 66 is the F-box domain; sequence ERSLDLLPAALLETIMTKLDVASLCSLASTCKTLKSCVTRVLTFTPN. LRR repeat units lie at residues 71–96, 120–145, 151–176, 194–221, 243–268, 277–301, 310–335, 336–361, 362–387, 388–412, 413–437, 439–463, 464–491, 492–517, 518–551, and 552–578; these read NVSL…KLDC, CRDF…CLGS, GRSI…ALMF, SDRL…EISG, VDCI…DIRD, VSDL…SLIR, FRRV…CLGG, FCRV…SIYH, GPKL…SLRR, CHLL…DLRG, CRNL…LLDG, DISD…SVRG, CRNL…DLSN, LPNL…QLRE, CRLI…DLYD, and CGGI…GITG. Residues 632–656 are disordered; sequence ILGDEGDVEMEDAEDESEEDASEED.

This Arabidopsis thaliana (Mouse-ear cress) protein is F-box/LRR-repeat protein 10 (FBL10).